We begin with the raw amino-acid sequence, 370 residues long: Putative agmatine deiminase (370 aa).

The Amidino-cysteine intermediate role is filled by Cys361.

The protein belongs to the agmatine deiminase family.

It catalyses the reaction agmatine + H2O = N-carbamoylputrescine + NH4(+). The polypeptide is Putative agmatine deiminase (Shewanella baltica (strain OS223)).